The primary structure comprises 341 residues: MKAKKQETAATMKDVALKAKVSTATVSRALMNPDKVSQATRNRVEKAAREVGYLPQPMGRNVKRNESRTILVIVPDICDPFFSEIIRGIEVTAANHGYLVLIGDCAHQNQQEKTFIDLIITKQIDGMLLLGSRLPFDASIEEQRNLPPMVMANEFAPELELPTVHIDNLTAAFDAVNYLYEQGHKRIGCIAGPEEMPLCHYRLQGYVQALRRCGIMVDPQYIARGDFTFEAGSKAMQQLLDLPQPPTAVFCHSDVMALGALSQAKRQGLKVPEDLSIIGFDNIDLTQFCDPPLTTIAQPRYEIGREAMLLLLDQMQGQHVGSGSRLMDCELIIRGSTRALP.

Residues 10-64 enclose the HTH lacI-type domain; sequence ATMKDVALKAKVSTATVSRALMNPDKVSQATRNRVEKAAREVGYLPQPMGRNVKR. A DNA-binding region (H-T-H motif) is located at residues 12 to 31; sequence MKDVALKAKVSTATVSRALM.

In terms of biological role, this protein negatively controls the transcription initiation of genes such as deoCABD, udp, and cdd encoding catabolizing enzymes and nupC, nupG, and tsx encoding transporting and pore-forming proteins. Binds cytidine and adenosine as effectors. This Escherichia coli (strain K12) protein is HTH-type transcriptional repressor CytR (cytR).